Reading from the N-terminus, the 96-residue chain is Large ribosomal subunit protein uL23cz (96 aa).

Belongs to the universal ribosomal protein uL23 family. In terms of assembly, part of the 50S ribosomal subunit.

The protein resides in the plastid. Its subcellular location is the chloroplast. Binds to 23S rRNA. The protein is Large ribosomal subunit protein uL23cz (rpl23-A) of Sorghum bicolor (Sorghum).